The primary structure comprises 314 residues: Coiled-coil domain-containing protein 92 (314 aa).

Coiled coils occupy residues 1 to 27 (MAAT…HAST) and 59 to 113 (DSSS…EKKY). 2 disordered regions span residues 153 to 193 (LSSS…KKSL) and 251 to 314 (ASDR…DRTV). Residues 176-186 (PPKDKLPETPR) show a composition bias toward basic and acidic residues. Ser192 carries the phosphoserine modification. A compositionally biased stretch (basic residues) spans 266–280 (KPHKTHVGVAHRIHH).

Interacts with CEP164. Phosphorylated at Ser-192 by TTBK2.

It is found in the cytoplasm. It localises to the cytoskeleton. Its subcellular location is the microtubule organizing center. The protein resides in the centrosome. The protein localises to the centriole. Interferon-stimulated protein that plays a role in innate immunity. The chain is Coiled-coil domain-containing protein 92 (Ccdc92) from Mus musculus (Mouse).